A 371-amino-acid chain; its full sequence is Neuropeptide S receptor (371 aa).

Over 1–52 the chain is Extracellular; sequence MPANFTEGSFDSNGTGQMLDSSPVACTETVTFTEVVEGKEWGSFYYSFKTEQ. 2 N-linked (GlcNAc...) asparagine glycosylation sites follow: Asn4 and Asn13. The chain crosses the membrane as a helical span at residues 53-73; the sequence is LITLWVLFVFTIVGNSVVLFS. The Cytoplasmic portion of the chain corresponds to 74–82; it reads TWRRKRKSR. A helical transmembrane segment spans residues 83 to 103; sequence MTFFVTQLAITDSFTGLVNIL. Residues 104–123 lie on the Extracellular side of the membrane; the sequence is TDIIWRFTGDFMAPDLVCRV. Cys121 and Cys197 are joined by a disulfide. A helical membrane pass occupies residues 124 to 144; the sequence is VRYLQVVLLYASTYVLVSLSI. The Cytoplasmic portion of the chain corresponds to 145-164; sequence DRYHAIVYPMKFLQGEKQAK. A helical membrane pass occupies residues 165–185; it reads VLIVIAWSLSFLFSIPTLIIF. Topologically, residues 186–212 are extracellular; the sequence is GKRTLSNGEVQCWALWPDDSYWTPYMT. The chain crosses the membrane as a helical span at residues 213 to 233; sequence IVAFLVYFIPLTIISVMYGIV. The Cytoplasmic segment spans residues 234-275; the sequence is IRTIWIKSKTYETVISNCSDGKLCSSYNRGLISKAKIKAIKY. Residues 276 to 296 traverse the membrane as a helical segment; that stretch reads SIVIILAFICCWSPYFLFDIL. Residues 297–312 are Extracellular-facing; it reads DNFNLLPDTQERFYAS. A helical membrane pass occupies residues 313–333; that stretch reads VIIQNLPALNSAINPLIYCVF. Topologically, residues 334 to 371 are cytoplasmic; it reads SSSISFPCGERRSQDSIMTFRERTERHEMQILSKPEFI.

This sequence belongs to the G-protein coupled receptor 1 family. Vasopressin/oxytocin receptor subfamily.

The protein resides in the cell membrane. In terms of biological role, G-protein coupled receptor for neuropeptide S (NPS). Promotes mobilization of intracellular Ca(2+) stores. Inhibits cell growth in response to NPS binding. Involved in pathogenesis of asthma and other IgE-mediated diseases. In Macaca mulatta (Rhesus macaque), this protein is Neuropeptide S receptor (NPSR1).